Consider the following 178-residue polypeptide: ATP-dependent protease subunit HslV (178 aa).

Threonine 7 is an active-site residue. Na(+) contacts are provided by glycine 162, cysteine 165, and threonine 168.

Belongs to the peptidase T1B family. HslV subfamily. In terms of assembly, a double ring-shaped homohexamer of HslV is capped on each side by a ring-shaped HslU homohexamer. The assembly of the HslU/HslV complex is dependent on binding of ATP.

It localises to the cytoplasm. The catalysed reaction is ATP-dependent cleavage of peptide bonds with broad specificity.. Allosterically activated by HslU binding. Functionally, protease subunit of a proteasome-like degradation complex believed to be a general protein degrading machinery. In Cupriavidus necator (strain ATCC 17699 / DSM 428 / KCTC 22496 / NCIMB 10442 / H16 / Stanier 337) (Ralstonia eutropha), this protein is ATP-dependent protease subunit HslV.